We begin with the raw amino-acid sequence, 117 residues long: Transcription elongation factor SPT4 (117 aa).

The segment at M1 to L40 is interaction with SUPT5H. The C4-type zinc-finger motif lies at C16 to C36.

It belongs to the SPT4 family. As to quaternary structure, interacts with SUPT5H to form the DSIF complex. DSIF interacts with RNA polymerase II and with the positive transcription elongation factor b complex (P-TEFb complex), which is composed of CDK9 and cyclin-T.

The protein resides in the nucleus. Functionally, may function as a component of the DRB sensitivity-inducing factor complex (DSIF complex), which regulates transcription elongation by RNA polymerase II. Probably enhances transcriptional pausing at sites proximal to the promoter, which may in turn facilitate the assembly of an elongation competent RNA polymerase II complex. The polypeptide is Transcription elongation factor SPT4 (supt4h1) (Xenopus laevis (African clawed frog)).